A 303-amino-acid polypeptide reads, in one-letter code: NAD kinase (303 aa).

Asp85 acts as the Proton acceptor in catalysis. NAD(+)-binding positions include 85–86 (DG), Arg90, 159–160 (ND), Lys187, Asp189, Ala224, and Gln259.

Belongs to the NAD kinase family. A divalent metal cation serves as cofactor.

It is found in the cytoplasm. The enzyme catalyses NAD(+) + ATP = ADP + NADP(+) + H(+). Its function is as follows. Involved in the regulation of the intracellular balance of NAD and NADP, and is a key enzyme in the biosynthesis of NADP. Catalyzes specifically the phosphorylation on 2'-hydroxyl of the adenosine moiety of NAD to yield NADP. The sequence is that of NAD kinase from Bdellovibrio bacteriovorus (strain ATCC 15356 / DSM 50701 / NCIMB 9529 / HD100).